The sequence spans 384 residues: Decapping nuclease RAI1 (384 aa).

A divalent metal cation is bound at residue Glu-168. Glu-217 lines the substrate pocket. A divalent metal cation contacts are provided by Asp-219, Glu-237, and Leu-238. Substrate is bound by residues Lys-239 and Gln-263.

The protein belongs to the DXO/Dom3Z family. Interacts with RAT1; the interaction is direct, stabilizes RAT1 protein structure and stimulates its exoribonuclease activity. The interaction also stimulates RAI1 pyrophosphohydrolase activity, probably by recruiting it to mRNA substrates. It depends on a divalent metal cation as a cofactor.

It localises to the nucleus. The enzyme catalyses a 5'-end NAD(+)-phospho-ribonucleoside in mRNA + H2O = a 5'-end phospho-ribonucleoside in mRNA + NAD(+) + H(+). The catalysed reaction is a 5'-end (N(7)-methyl 5'-triphosphoguanosine)-ribonucleoside-ribonucleotide in mRNA + H2O = a (N(7)-methyl 5'-triphosphoguanosine)-nucleoside + a 5'-end phospho-ribonucleoside in mRNA + H(+). It carries out the reaction a 5'-end triphospho-ribonucleoside in mRNA + H2O = a 5'-end phospho-ribonucleoside in mRNA + diphosphate + H(+). Functionally, decapping enzyme for NAD-capped RNAs: specifically hydrolyzes the nicotinamide adenine dinucleotide (NAD) cap from a subset of RNAs by removing the entire NAD moiety from the 5'-end of an NAD-capped RNA. The NAD-cap is present at the 5'-end of some RNAs and snoRNAs. In contrast to the canonical 5'-end N7 methylguanosine (m7G) cap, the NAD cap promotes mRNA decay. Also acts as a non-canonical decapping enzyme that removes the entire cap structure of m7G capped or incompletely capped RNAs. Has decapping activity toward incomplete 5'-end m7G cap mRNAs such as unmethylated 5'-end-capped RNA (cap0), while it has no activity toward 2'-O-ribose methylated m7G cap (cap1). Also possesses RNA 5'-pyrophosphohydrolase activity by hydrolyzing the 5'-end triphosphate to release pyrophosphates. Stimulates exoribonuclease activity of Rat1, allowing it to degrade RNAs with stable secondary structure more effectively. The polypeptide is Decapping nuclease RAI1 (RAI1) (Kluyveromyces lactis (strain ATCC 8585 / CBS 2359 / DSM 70799 / NBRC 1267 / NRRL Y-1140 / WM37) (Yeast)).